Reading from the N-terminus, the 301-residue chain is Acidic endochitinase (301 aa).

The signal sequence occupies residues 1-25 (MARTPQSTPLLISLSVLALLQTSYA). The 276-residue stretch at 26–301 (GGIAIYWGQN…GYSSSIKSSV (276 aa)) folds into the GH18 domain. Disulfide bonds link cysteine 45-cysteine 92 and cysteine 75-cysteine 82. Catalysis depends on glutamate 152, which acts as the Proton donor. An intrachain disulfide couples cysteine 187 to cysteine 216.

It belongs to the glycosyl hydrolase 18 family. Chitinase class II subfamily.

The catalysed reaction is Random endo-hydrolysis of N-acetyl-beta-D-glucosaminide (1-&gt;4)-beta-linkages in chitin and chitodextrins.. Defense against chitin containing fungal pathogens. This is Acidic endochitinase (CHIT3) from Vitis vinifera (Grape).